Here is a 339-residue protein sequence, read N- to C-terminus: Glyceraldehyde-3-phosphate dehydrogenase (339 aa).

NAD(+)-binding positions include 13-14 (RI), aspartate 35, and lysine 84. Residues 156 to 158 (SCT), threonine 187, 216 to 217 (TG), and arginine 239 each bind D-glyceraldehyde 3-phosphate. Cysteine 157 acts as the Nucleophile in catalysis. Residue asparagine 321 participates in NAD(+) binding.

Belongs to the glyceraldehyde-3-phosphate dehydrogenase family. Homotetramer.

It is found in the cytoplasm. The enzyme catalyses D-glyceraldehyde 3-phosphate + phosphate + NAD(+) = (2R)-3-phospho-glyceroyl phosphate + NADH + H(+). It functions in the pathway carbohydrate degradation; glycolysis; pyruvate from D-glyceraldehyde 3-phosphate: step 1/5. This Brugia malayi (Filarial nematode worm) protein is Glyceraldehyde-3-phosphate dehydrogenase (G3PD).